We begin with the raw amino-acid sequence, 509 residues long: tRNA (guanine(37)-N(1))-methyltransferase (509 aa).

The N-terminal 57 residues, 1-57 (MVLWILWRPFGFSRRLLKLERHSITESKSLIPLAWTSLTQTLSESPGIFLLGQRKRF), are a transit peptide targeting the mitochondrion. S-adenosyl-L-methionine contacts are provided by residues His289, 327–328 (DL), 355–356 (DG), and Asn387. The segment at 478 to 509 (TKNPENHEDPPLKRQRTAEAFSDEKTQIASNT) is disordered.

This sequence belongs to the class I-like SAM-binding methyltransferase superfamily. TRM5/TYW2 family. In terms of assembly, monomer.

It is found in the mitochondrion matrix. The protein resides in the nucleus. The protein localises to the cytoplasm. The enzyme catalyses guanosine(37) in tRNA + S-adenosyl-L-methionine = N(1)-methylguanosine(37) in tRNA + S-adenosyl-L-homocysteine + H(+). Functionally, involved in mitochondrial tRNA methylation. Specifically methylates the N1 position of guanosine-37 in various tRNAs. Methylation is not dependent on the nature of the nucleoside 5' of the target nucleoside. This is the first step in the biosynthesis of wybutosine (yW), a modified base adjacent to the anticodon of tRNAs and required for accurate decoding. This chain is tRNA (guanine(37)-N(1))-methyltransferase, found in Macaca fascicularis (Crab-eating macaque).